Here is a 757-residue protein sequence, read N- to C-terminus: Cellulose synthase-like protein B2 (757 aa).

2 helical membrane passes run 24-44 (AVDL…ILYM) and 48-68 (GIIW…WLLS). Active-site residues include Asp-136 and Asp-461. The next 6 membrane-spanning stretches (helical) occupy residues 533–555 (AYLC…LPAY), 568–588 (LCLG…LWEF), 607–627 (IVAT…LLGL), 672–692 (FLPG…VFVG), 704–724 (GSGL…FPFL), and 735–755 (IPLS…VFSV).

Belongs to the glycosyltransferase 2 family. Plant cellulose synthase-like B subfamily. In terms of tissue distribution, expressed in young seedlings, primarily in the root vascular tissue.

The protein resides in the golgi apparatus membrane. In terms of biological role, thought to be a Golgi-localized beta-glycan synthase that polymerize the backbones of noncellulosic polysaccharides (hemicelluloses) of plant cell wall. In Arabidopsis thaliana (Mouse-ear cress), this protein is Cellulose synthase-like protein B2 (CSLB2).